A 348-amino-acid chain; its full sequence is 4-hydroxyphenylpyruvate dioxygenase (348 aa).

VOC domains lie at 11–141 (GFAF…ITSP) and 151–303 (AIDH…IFTE). Fe cation is bound by residues histidine 154, histidine 232, and glutamate 312.

It belongs to the 4HPPD family. It depends on Fe cation as a cofactor.

It carries out the reaction 3-(4-hydroxyphenyl)pyruvate + O2 = homogentisate + CO2. Its function is as follows. Catalyzes the transformation of p-hydroxyphenylpyruvate into HGA. Has hemolytic and brown pigment production activity. The polypeptide is 4-hydroxyphenylpyruvate dioxygenase (lly) (Legionella pneumophila subsp. pneumophila (strain Philadelphia 1 / ATCC 33152 / DSM 7513)).